The primary structure comprises 141 residues: Putative nickel-responsive regulator (141 aa).

The Ni(2+) site is built by His-80, His-91, His-93, and Cys-99.

Belongs to the transcriptional regulatory CopG/NikR family. Ni(2+) serves as cofactor.

Its function is as follows. Transcriptional regulator. The polypeptide is Putative nickel-responsive regulator (Methanococcus aeolicus (strain ATCC BAA-1280 / DSM 17508 / OCM 812 / Nankai-3)).